A 378-amino-acid chain; its full sequence is Putative F-box protein At5g51000 (378 aa).

Residues 1–47 (MSTMSDLFPDLVEEILSRVPITSLKAVKLTCKQWNDLSKDSSFTKNH) form the F-box domain.

The polypeptide is Putative F-box protein At5g51000 (Arabidopsis thaliana (Mouse-ear cress)).